Here is a 230-residue protein sequence, read N- to C-terminus: Oxygen-evolving enhancer protein 3-2, chloroplastic (230 aa).

Residues 1–49 constitute a chloroplast transit peptide; the sequence is MAQAVTSMAGLRGASQAVLEGSLQINGSNRLNISRVSVGSQRTGLVIRA. A thylakoid-targeting transit peptide spans 50-82; it reads QQNVSVPESSRRSVIGLVAAGLAGGSFVKAVFA. The residue at position 125 (S125) is a Phosphoserine. Residue T195 is modified to Phosphothreonine. Residue Y215 is modified to Phosphotyrosine. Residue S216 is modified to Phosphoserine. T218 carries the phosphothreonine modification.

Belongs to the PsbQ family.

It is found in the plastid. The protein resides in the chloroplast thylakoid membrane. Its function is as follows. Required for photosystem II assembly/stability and photoautotrophic growth under low light conditions. The chain is Oxygen-evolving enhancer protein 3-2, chloroplastic (PSBQ2) from Arabidopsis thaliana (Mouse-ear cress).